Here is a 277-residue protein sequence, read N- to C-terminus: Homeobox protein Nkx-6.2 (277 aa).

Positions 89–142 (AGVYFGPAAAVARGYPKPLAELPGRPPIFWPGVVQGAPWRDPRLAGPAPAGGVL) are repressor domain. Disordered regions lie at residues 132–155 (LAGPAPAGGVLDKDGKKKHSRPTF) and 210–250 (EMAS…DDEK). The homeobox DNA-binding region spans 148 to 207 (KKHSRPTFSGQQIFALEKTFEQTKYLAGPERARLAYSLGMTESQVKVWFQNRRTKWRKRH). Basic and acidic residues predominate over residues 216 to 226 (KKQDSDAEKLK).

Highest expression in brain.

The protein resides in the nucleus. In terms of biological role, transcription factor with repressor activity involved in the regulation of axon-glial interactions at myelin paranodes in oligodendrocytes. Binds to the consensus DNA sequence 5'-(A/T)TTAATGA-3'. In oligodendrocytes, binds to MBP and PLP1 promoter regions. The sequence is that of Homeobox protein Nkx-6.2 (NKX6-2) from Homo sapiens (Human).